The following is a 304-amino-acid chain: Cell surface-binding protein OPG105 (304 aa).

An Alpha-carbonic anhydrase domain is found at 1-235; the sequence is MSQQLSPINI…NDDTEVYYSG (235 aa). The Virion surface segment spans residues 1 to 275; the sequence is MSQQLSPINI…YQKYIEGNKT (275 aa). The helical transmembrane segment at 276–294 threads the bilayer; that stretch reads FAIIAIVFVYILTAILFLM. Residues 295–304 lie on the Intravirion side of the membrane; sequence SRRYSREKQN.

Belongs to the alpha-carbonic anhydrase family. As to quaternary structure, homodimer; disulfide-linked. In terms of processing, apparently non-glycosylated.

Its subcellular location is the virion membrane. Its function is as follows. Binds to chondroitin sulfate on the cell surface to provide virion attachment to target cell. This Homo sapiens (Human) protein is Cell surface-binding protein OPG105 (OPG105).